We begin with the raw amino-acid sequence, 211 residues long: uncharacterized protein (211 aa).

This is an uncharacterized protein from Archaeoglobus fulgidus (strain ATCC 49558 / DSM 4304 / JCM 9628 / NBRC 100126 / VC-16).